A 131-amino-acid polypeptide reads, in one-letter code: Methylglyoxal synthase (131 aa).

The 131-residue stretch at 1–131 (MKIALIAHDK…GDLDYRKLRK (131 aa)) folds into the MGS-like domain. Residues histidine 8, lysine 12, 34 to 37 (TGTT), and 54 to 55 (SG) each bind substrate. Aspartate 60 functions as the Proton donor/acceptor in the catalytic mechanism. Histidine 87 serves as a coordination point for substrate.

This sequence belongs to the methylglyoxal synthase family.

It carries out the reaction dihydroxyacetone phosphate = methylglyoxal + phosphate. Catalyzes the formation of methylglyoxal from dihydroxyacetone phosphate. The protein is Methylglyoxal synthase of Bacillus cereus (strain ATCC 10987 / NRS 248).